The following is a 151-amino-acid chain: uncharacterized protein (151 aa).

The segment at 123-151 (PAGQNAGTGPAQKLKTDETRCYERRGGSQ) is disordered. A compositionally biased stretch (basic and acidic residues) spans 136-151 (LKTDETRCYERRGGSQ).

This is an uncharacterized protein from Triticum aestivum (Wheat).